A 130-amino-acid polypeptide reads, in one-letter code: MSLMDPLANALNHISNCENVGKNTAYLKPASKLIGRVLKVMQDQGYIGNFEYIEDGKAGVYKVTLIGQINKCGAVKPRFAVKNQEFEKFEKRYLPAKGFGLLIVSTPKGLMTHDEAKDSGIGGRLISYIY.

Belongs to the universal ribosomal protein uS8 family. In terms of assembly, part of the 30S ribosomal subunit.

In terms of biological role, one of the primary rRNA binding proteins, it binds directly to 16S rRNA central domain where it helps coordinate assembly of the platform of the 30S subunit. The polypeptide is Small ribosomal subunit protein uS8 (Methanococcus voltae).